The following is a 524-amino-acid chain: GMP synthase [glutamine-hydrolyzing] (524 aa).

Positions Arg8–Leu206 constitute a Glutamine amidotransferase type-1 domain. Cys85 acts as the Nucleophile in catalysis. Catalysis depends on residues His180 and Glu182. A GMPS ATP-PPase domain is found at Trp207–Arg399. Residue Ser234–Ser240 participates in ATP binding.

Homodimer.

The enzyme catalyses XMP + L-glutamine + ATP + H2O = GMP + L-glutamate + AMP + diphosphate + 2 H(+). Its pathway is purine metabolism; GMP biosynthesis; GMP from XMP (L-Gln route): step 1/1. In terms of biological role, catalyzes the synthesis of GMP from XMP. In Nitrosococcus oceani (strain ATCC 19707 / BCRC 17464 / JCM 30415 / NCIMB 11848 / C-107), this protein is GMP synthase [glutamine-hydrolyzing].